Consider the following 33-residue polypeptide: Phosphoglycerate kinase (33 aa).

An AMP-binding site is contributed by Lys13. Lys13 provides a ligand contact to ATP.

This sequence belongs to the phosphoglycerate kinase family. Monomer. The cofactor is Mg(2+).

It carries out the reaction (2R)-3-phosphoglycerate + ATP = (2R)-3-phospho-glyceroyl phosphate + ADP. The sequence is that of Phosphoglycerate kinase from Pseudotsuga menziesii (Douglas-fir).